Consider the following 342-residue polypeptide: D-erythrose-4-phosphate dehydrogenase (342 aa).

Arg11–Val12 is a binding site for NAD(+). Residues Ser153–Thr155, Arg199, Thr212–Lys213, and Arg235 contribute to the substrate site. Cys154 functions as the Nucleophile in the catalytic mechanism. Asn317 provides a ligand contact to NAD(+).

This sequence belongs to the glyceraldehyde-3-phosphate dehydrogenase family. Epd subfamily. Homotetramer.

Its subcellular location is the cytoplasm. It catalyses the reaction D-erythrose 4-phosphate + NAD(+) + H2O = 4-phospho-D-erythronate + NADH + 2 H(+). Its pathway is cofactor biosynthesis; pyridoxine 5'-phosphate biosynthesis; pyridoxine 5'-phosphate from D-erythrose 4-phosphate: step 1/5. Its function is as follows. Catalyzes the NAD-dependent conversion of D-erythrose 4-phosphate to 4-phosphoerythronate. The protein is D-erythrose-4-phosphate dehydrogenase of Pseudoalteromonas atlantica (strain T6c / ATCC BAA-1087).